The following is a 355-amino-acid chain: Diacylglycerol O-acyltransferase 2A (355 aa).

2 helical membrane passes run 41 to 61 and 62 to 78; these read LLWC…CSIP and VLLW…ILVW. Asparagine 142 carries an N-linked (GlcNAc...) asparagine glycan.

The protein belongs to the diacylglycerol acyltransferase family.

The protein resides in the endoplasmic reticulum membrane. It carries out the reaction an acyl-CoA + a 1,2-diacyl-sn-glycerol = a triacyl-sn-glycerol + CoA. It participates in glycerolipid metabolism; triacylglycerol biosynthesis. In terms of biological role, catalyzes the terminal and only committed step in triacylglycerol synthesis by using diacylglycerol and fatty acyl CoA as substrates. Required for storage lipid synthesis. The sequence is that of Diacylglycerol O-acyltransferase 2A (DGAT2A) from Umbelopsis ramanniana (Oleaginous fungus).